Consider the following 325-residue polypeptide: Polyamine aminopropyltransferase (325 aa).

Positions 11 to 248 (SSMAEDFAVE…TLWAMAMASD (238 aa)) constitute a PABS domain. Gln44 serves as a coordination point for S-methyl-5'-thioadenosine. Spermidine-binding residues include His75 and Asp99. Residues Glu119 and 151-152 (DG) contribute to the S-methyl-5'-thioadenosine site. Catalysis depends on Asp169, which acts as the Proton acceptor. Residue Pro176 coordinates S-methyl-5'-thioadenosine.

The protein belongs to the spermidine/spermine synthase family. Homodimer or homotetramer.

The protein localises to the cytoplasm. The enzyme catalyses S-adenosyl 3-(methylsulfanyl)propylamine + putrescine = S-methyl-5'-thioadenosine + spermidine + H(+). Its pathway is amine and polyamine biosynthesis; spermidine biosynthesis; spermidine from putrescine: step 1/1. Catalyzes the irreversible transfer of a propylamine group from the amino donor S-adenosylmethioninamine (decarboxy-AdoMet) to putrescine (1,4-diaminobutane) to yield spermidine. In Nitrosomonas europaea (strain ATCC 19718 / CIP 103999 / KCTC 2705 / NBRC 14298), this protein is Polyamine aminopropyltransferase.